Consider the following 267-residue polypeptide: Ribosyldihydronicotinamide dehydrogenase-like protein traD (267 aa).

FAD-binding positions include His-9, 15–16 (LN), and 100–103 (LWWF). Substrate is bound at residue 122-124 (GHG). Residues 152 to 155 (TLGG) and Tyr-160 contribute to the FAD site.

The protein belongs to the NAD(P)H dehydrogenase (quinone) family. Homodimer. FAD is required as a cofactor.

It functions in the pathway secondary metabolite biosynthesis. Ribosyldihydronicotinamide dehydrogenase-like protein; part of the tra gene cluster that produces terrestric acid. The clavatol biosynthesis cluster cla and the terrestric acid cluster tra are both involved in the production of peniphenones and penilactones. The non-reducing PKS claF is responsible for the formation of clavatol from successive condensations of 3 malonyl-CoA units, presumably with a simple acetyl-CoA starter unit, and 2 methylation steps. The esterase claE probably collaborates with claF by catalyzing the hydrolysis of ACP-bound acyl intermediates to free the ACP from stalled intermediates. The clavatol oxidase claD then converts clavatol to hydroxyclavatol. Spontaneous dehydration of hydroxyclavatol leads to the accumulation of the highly active ortho-quinone methide. On the other hand, the PKS-NRPS hybrid traA is involved in the formation of crustosic acid, with the help of traB and traD. The polyketide synthase module (PKS) of traA is responsible for the synthesis of the polyketide backbone via the condensation of an acetyl-CoA starter unit with 3 malonyl-CoA units. The downstream nonribosomal peptide synthetase (NRPS) module then amidates the carboxyl end of the polyketide with L-malic acid. Because traA lacks a designated enoylreductase (ER) domain, the required activity is provided the enoyl reductase traG. Crustosic acid undergoes decarboxylation and isomerization to the terrestric acid, catalyzed by the 2-oxoglutarate-dependent dioxygenase traH. Both acids are further converted to the 2 gamma-butyrolactones (R)-5-methyltetronic acid and (S)-5-carboxylmethyltetronic acid, with involvement of the cytochrome P450 monooxygenase claJ. Spontaneous addition of the methide to these gamma-butyrolactones leads to peniphenone D and penilactone D, which undergo again stereospecific attacking by methide to give penilactones A and B. This is Ribosyldihydronicotinamide dehydrogenase-like protein traD from Penicillium crustosum (Blue mold fungus).